Consider the following 144-residue polypeptide: Grifin (144 aa).

In terms of domain architecture, Galectin spans 5–133; that stretch reads FEAFCAGGLA…EHRLAQVELA (129 aa). At Ser-138 the chain carries Phosphoserine.

Homodimer.

In Mus musculus (Mouse), this protein is Grifin (Grifin).